Here is a 213-residue protein sequence, read N- to C-terminus: Adenylate kinase (213 aa).

Residue 10–15 (GAGKGT) coordinates ATP. Residues 30–59 (STGDMFRAAMANQTEMGLLAKSYIDKGDLV) are NMP. AMP is bound by residues Thr31, Arg36, 57–59 (DLV), 86–89 (GYPR), and Gln93. The tract at residues 127-160 (GRIIHKKTGETFHKIFNPPAGDYDENDYYQREDD) is LID. Residues Arg128 and 137–138 (TF) each bind ATP. Arg157 and Arg168 together coordinate AMP. Gln196 serves as a coordination point for ATP.

The protein belongs to the adenylate kinase family. As to quaternary structure, monomer.

The protein localises to the cytoplasm. The enzyme catalyses AMP + ATP = 2 ADP. It functions in the pathway purine metabolism; AMP biosynthesis via salvage pathway; AMP from ADP: step 1/1. In terms of biological role, catalyzes the reversible transfer of the terminal phosphate group between ATP and AMP. Plays an important role in cellular energy homeostasis and in adenine nucleotide metabolism. In Streptococcus uberis (strain ATCC BAA-854 / 0140J), this protein is Adenylate kinase.